A 69-amino-acid polypeptide reads, in one-letter code: NAD(P)H-quinone oxidoreductase subunit L (69 aa).

A run of 2 helical transmembrane segments spans residues 5 to 25 (LILL…ITYF) and 40 to 60 (GFMY…SPFL).

It belongs to the complex I NdhL subunit family. NDH-1 can be composed of about 15 different subunits; different subcomplexes with different compositions have been identified which probably have different functions.

The protein localises to the cellular thylakoid membrane. It catalyses the reaction a plastoquinone + NADH + (n+1) H(+)(in) = a plastoquinol + NAD(+) + n H(+)(out). The enzyme catalyses a plastoquinone + NADPH + (n+1) H(+)(in) = a plastoquinol + NADP(+) + n H(+)(out). In terms of biological role, NDH-1 shuttles electrons from an unknown electron donor, via FMN and iron-sulfur (Fe-S) centers, to quinones in the respiratory and/or the photosynthetic chain. The immediate electron acceptor for the enzyme in this species is believed to be plastoquinone. Couples the redox reaction to proton translocation, and thus conserves the redox energy in a proton gradient. Cyanobacterial NDH-1 also plays a role in inorganic carbon-concentration. In Acaryochloris marina (strain MBIC 11017), this protein is NAD(P)H-quinone oxidoreductase subunit L.